An 84-amino-acid polypeptide reads, in one-letter code: ATP synthase subunit c (84 aa).

The next 2 membrane-spanning stretches (helical) occupy residues 21–38 (ALGA…IGKI) and 60–80 (MIII…VCLL).

The protein belongs to the ATPase C chain family. In terms of assembly, F-type ATPases have 2 components, F(1) - the catalytic core - and F(0) - the membrane proton channel. F(1) has five subunits: alpha(3), beta(3), gamma(1), delta(1), epsilon(1). F(0) has three main subunits: a(1), b(2) and c(10-14). The alpha and beta chains form an alternating ring which encloses part of the gamma chain. F(1) is attached to F(0) by a central stalk formed by the gamma and epsilon chains, while a peripheral stalk is formed by the delta and b chains.

It localises to the cell inner membrane. In terms of biological role, f(1)F(0) ATP synthase produces ATP from ADP in the presence of a proton or sodium gradient. F-type ATPases consist of two structural domains, F(1) containing the extramembraneous catalytic core and F(0) containing the membrane proton channel, linked together by a central stalk and a peripheral stalk. During catalysis, ATP synthesis in the catalytic domain of F(1) is coupled via a rotary mechanism of the central stalk subunits to proton translocation. Functionally, key component of the F(0) channel; it plays a direct role in translocation across the membrane. A homomeric c-ring of between 10-14 subunits forms the central stalk rotor element with the F(1) delta and epsilon subunits. In Phocaeicola vulgatus (strain ATCC 8482 / DSM 1447 / JCM 5826 / CCUG 4940 / NBRC 14291 / NCTC 11154) (Bacteroides vulgatus), this protein is ATP synthase subunit c.